Reading from the N-terminus, the 163-residue chain is Large ribosomal subunit protein uL10 (163 aa).

This sequence belongs to the universal ribosomal protein uL10 family. Part of the ribosomal stalk of the 50S ribosomal subunit. The N-terminus interacts with L11 and the large rRNA to form the base of the stalk. The C-terminus forms an elongated spine to which L12 dimers bind in a sequential fashion forming a multimeric L10(L12)X complex.

Forms part of the ribosomal stalk, playing a central role in the interaction of the ribosome with GTP-bound translation factors. The sequence is that of Large ribosomal subunit protein uL10 from Mannheimia succiniciproducens (strain KCTC 0769BP / MBEL55E).